Here is a 368-residue protein sequence, read N- to C-terminus: Glutamate 5-kinase (368 aa).

Lys-10 serves as a coordination point for ATP. Substrate contacts are provided by Ser-50, Asp-137, and Asn-149. ATP is bound at residue 169–170; that stretch reads TD. One can recognise a PUA domain in the interval 276–354; sequence RGTLVLDDGA…ESIVRELGYM (79 aa).

The protein belongs to the glutamate 5-kinase family.

The protein resides in the cytoplasm. The catalysed reaction is L-glutamate + ATP = L-glutamyl 5-phosphate + ADP. The protein operates within amino-acid biosynthesis; L-proline biosynthesis; L-glutamate 5-semialdehyde from L-glutamate: step 1/2. In terms of biological role, catalyzes the transfer of a phosphate group to glutamate to form L-glutamate 5-phosphate. This is Glutamate 5-kinase from Pseudomonas savastanoi pv. phaseolicola (strain 1448A / Race 6) (Pseudomonas syringae pv. phaseolicola (strain 1448A / Race 6)).